A 91-amino-acid chain; its full sequence is Small ribosomal subunit protein bS6 (91 aa).

It belongs to the bacterial ribosomal protein bS6 family.

In terms of biological role, binds together with bS18 to 16S ribosomal RNA. The protein is Small ribosomal subunit protein bS6 of Leptospira biflexa serovar Patoc (strain Patoc 1 / Ames).